The primary structure comprises 203 residues: CASP-like protein 2U2 (203 aa).

Residues M1 to A21 form a disordered region. At M1–G27 the chain is on the cytoplasmic side. Residues A28–V48 form a helical membrane-spanning segment. The Extracellular segment spans residues K49–S73. N51 is a glycosylation site (N-linked (GlcNAc...) asparagine). The helical transmembrane segment at A74–L94 threads the bilayer. The Cytoplasmic segment spans residues A95–K108. A helical transmembrane segment spans residues L109–A129. Over A130 to R163 the chain is Extracellular. Residues A164 to A184 form a helical membrane-spanning segment. At Q185–I203 the chain is on the cytoplasmic side.

It belongs to the Casparian strip membrane proteins (CASP) family. Homodimer and heterodimers.

It is found in the cell membrane. The protein is CASP-like protein 2U2 of Osmunda lancea (Fern).